Consider the following 125-residue polypeptide: Fluoride-specific ion channel FluC (125 aa).

4 helical membrane-spanning segments follow: residues 5–25, 37–57, 71–91, and 97–117; these read ILAI…LALW, LAAN…FHLL, GFLG…TMLL, and VALL…WLGI. Na(+) contacts are provided by Gly74 and Thr77.

This sequence belongs to the fluoride channel Fluc/FEX (TC 1.A.43) family.

It localises to the cell inner membrane. The enzyme catalyses fluoride(in) = fluoride(out). With respect to regulation, na(+) is not transported, but it plays an essential structural role and its presence is essential for fluoride channel function. In terms of biological role, fluoride-specific ion channel. Important for reducing fluoride concentration in the cell, thus reducing its toxicity. The chain is Fluoride-specific ion channel FluC from Variovorax paradoxus (strain S110).